The sequence spans 1066 residues: E3 ubiquitin-protein ligase PDZRN3 (1066 aa).

An RING-type; degenerate zinc finger spans residues 18–56 (CALCHKVLEDPLTTPCGHVFCAGCVLPWVVQEGSCPARC). A TRAF-type zinc finger spans residues 100-158 (EHLERCDFAPARCRHAGCGQVLLRRDVEAHMRDACDARPVGRCQEGCGLPLTHGEQRAG). 2 PDZ domains span residues 249–339 (TLVL…LRRT) and 419–503 (EVDL…IARP). A Phosphoserine modification is found at Ser-427. The tract at residues 545–603 (QKKHDEDGGTTDTATILSNQHEKDSGVGRTDESTRNDESSEQENNGDDATASSNPLAGQ) is disordered. The span at 554–563 (TTDTATILSN) shows a compositional bias: polar residues. Over residues 564 to 582 (QHEKDSGVGRTDESTRNDE) the composition is skewed to basic and acidic residues. Positions 594-603 (TASSNPLAGQ) are enriched in polar residues. The stretch at 679–704 (ESVDKELELLNEELRSIELECLSIVR) forms a coiled coil. Basic and acidic residues predominate over residues 744–754 (TELPEKSDKDS). Disordered stretches follow at residues 744–778 (TELP…PDNS) and 808–863 (LLSI…LPSY). 2 stretches are compositionally biased toward polar residues: residues 755–769 (SSAY…STPL) and 845–855 (GSRSPTPSQKL). Positions 975–1025 (KEERKQHLVKAKEQRRRREFMMQSRLDCLKEQQAADDRKEMNILELSHKKM) form a coiled coil.

In terms of assembly, interacts with NLGN1 and EFNB2. Interacts with UBE2D2 and with MUSK via the first PDZ domain. In terms of processing, auto-ubiquitinated. As to expression, widely expressed, including in the heart, skeletal muscle and liver and, at lower levels, in the brain, colon, small intestine, placenta and lung. Down-regulated in ovarian serous papillary tumors.

The protein localises to the synapse. It localises to the cytoplasm. It carries out the reaction S-ubiquitinyl-[E2 ubiquitin-conjugating enzyme]-L-cysteine + [acceptor protein]-L-lysine = [E2 ubiquitin-conjugating enzyme]-L-cysteine + N(6)-ubiquitinyl-[acceptor protein]-L-lysine.. It participates in protein modification; protein ubiquitination. E3 ubiquitin-protein ligase. Plays an important role in regulating the surface level of MUSK on myotubes. Mediates the ubiquitination of MUSK, promoting its endocytosis and lysosomal degradation. Might contribute to terminal myogenic differentiation. The protein is E3 ubiquitin-protein ligase PDZRN3 (PDZRN3) of Homo sapiens (Human).